Consider the following 368-residue polypeptide: UDP-N-acetylenolpyruvoylglucosamine reductase (368 aa).

One can recognise an FAD-binding PCMH-type domain in the interval 32 to 199 (IGGKPRSAVR…LAIELQLLTD (168 aa)). The active site involves Arg177. The active-site Proton donor is the Ser257. Glu358 is an active-site residue.

This sequence belongs to the MurB family. It depends on FAD as a cofactor.

The protein resides in the cytoplasm. It catalyses the reaction UDP-N-acetyl-alpha-D-muramate + NADP(+) = UDP-N-acetyl-3-O-(1-carboxyvinyl)-alpha-D-glucosamine + NADPH + H(+). It functions in the pathway cell wall biogenesis; peptidoglycan biosynthesis. In terms of biological role, cell wall formation. This Corynebacterium glutamicum (strain R) protein is UDP-N-acetylenolpyruvoylglucosamine reductase.